A 385-amino-acid chain; its full sequence is Taurine hydroxylase-like protein SAT17 (385 aa).

The protein operates within mycotoxin biosynthesis. Taurine hydroxylase-like protein; part of the satratoxin SC3 cluster involved in the biosynthesis of satratoxins, trichothecene mycotoxins that are associated with human food poisonings. Satratoxins are suggested to be made by products of multiple gene clusters (SC1, SC2 and SC3) that encode 21 proteins in all, including polyketide synthases, acetyltransferases, and other enzymes expected to modify the trichothecene skeleton. SC1 encodes 10 proteins, SAT1 to SAT10. The largest are SAT8, which encodes a putative polyketide synthase (PKS) with a conventional non-reducing architecture, and SAT10, a putative protein containing four ankyrin repeats and thus may be involved in protein scaffolding. The putative short-chain reductase SAT3 may assist the PKS in some capacity. SAT6 contains a secretory lipase domain and acts probably as a trichothecene esterase. SAT5 encodes a putative acetyltransferase, and so, with SAT6, may affect endogenous protection from toxicity. The probable transcription factor SAT9 may regulate the expression of the SC1 cluster. SC2 encodes proteins SAT11 to SAT16, the largest of which encodes the putative reducing PKS SAT13. SAT11 is a cytochrome P450 monooxygenase, while SAT14 and SAT16 are probable acetyltransferases. The SC2 cluster may be regulated by the transcription factor SAT15. SC3 is a small cluster that encodes 5 proteins, SAT17 to SAT21. SAT21 is a putative MFS-type transporter which may have a role in exporting secondary metabolites. The four other proteins putatively encoded in SC3 include the taurine hydroxylase-like protein SAT17, the O-methyltransferase SAT18, the acetyltransferase SAT19, and the Cys6-type zinc finger SAT20, the latter being probably involved in regulation of SC3 expression. This is Taurine hydroxylase-like protein SAT17 from Stachybotrys chartarum (strain CBS 109288 / IBT 7711) (Toxic black mold).